A 177-amino-acid polypeptide reads, in one-letter code: Large ribosomal subunit protein uL6 (177 aa).

The protein belongs to the universal ribosomal protein uL6 family. In terms of assembly, part of the 50S ribosomal subunit.

This protein binds to the 23S rRNA, and is important in its secondary structure. It is located near the subunit interface in the base of the L7/L12 stalk, and near the tRNA binding site of the peptidyltransferase center. The polypeptide is Large ribosomal subunit protein uL6 (Brucella melitensis biotype 1 (strain ATCC 23456 / CCUG 17765 / NCTC 10094 / 16M)).